A 347-amino-acid chain; its full sequence is Core-capsid bridging protein (347 aa).

The interval 290-320 is disordered; sequence GYRGTTFQRRATAPSRRRGPSRRRRRRKATL. Over residues 304–318 the composition is skewed to basic residues; that stretch reads SRRRGPSRRRRRRKA.

This sequence belongs to the adenoviridae core-capsid bridging protein family. Monomer. Homodimer. Exists in equilibrium between monomers and dimers in solution. Interacts with the histone-like nucleoprotein; this interactions bridge the virus core to the capsid. Interacts with core protein X; this interactions bridge the virus core to the capsid. Interacts with the endosome lysis protein VI; this interactions bridge the virus core to the capsid. Interacts with the peripentonal hexons. Interacts with host NPM1; this interaction might play a role in virus assembly.

It localises to the virion. The protein localises to the host nucleus. It is found in the host nucleolus. In terms of biological role, associates loosely with the viral DNA to form an outer shell around the nucleoprotein-DNA complex and links it with the capsid by binding the endosome lysis protein. Dissociates from the viral genome during entry. Might be involved in nuclear capsid assembly of the viral particles through its association with NPM1/nucleophosmin. The sequence is that of Core-capsid bridging protein from Homo sapiens (Human).